A 423-amino-acid chain; its full sequence is Adenylosuccinate synthetase (423 aa).

GTP is bound by residues 12-18 (GDEGKGK) and 40-42 (GHT). D13 (proton acceptor) is an active-site residue. Mg(2+)-binding residues include D13 and G40. IMP-binding positions include 13–16 (DEGK), 38–41 (NAGH), T129, R143, Q221, T236, and R300. H41 functions as the Proton donor in the catalytic mechanism. 296–302 (SVTGRKR) is a substrate binding site. Residues R302, 328–330 (KSD), and 408–410 (SVG) contribute to the GTP site.

The protein belongs to the adenylosuccinate synthetase family. Homodimer. It depends on Mg(2+) as a cofactor.

It is found in the cytoplasm. The catalysed reaction is IMP + L-aspartate + GTP = N(6)-(1,2-dicarboxyethyl)-AMP + GDP + phosphate + 2 H(+). The protein operates within purine metabolism; AMP biosynthesis via de novo pathway; AMP from IMP: step 1/2. Plays an important role in the de novo pathway of purine nucleotide biosynthesis. Catalyzes the first committed step in the biosynthesis of AMP from IMP. The polypeptide is Adenylosuccinate synthetase (Bacteroides fragilis (strain ATCC 25285 / DSM 2151 / CCUG 4856 / JCM 11019 / LMG 10263 / NCTC 9343 / Onslow / VPI 2553 / EN-2)).